Reading from the N-terminus, the 304-residue chain is Thymidylate synthase (304 aa).

DUMP is bound by residues Arg30 and 157-158 (RR). Cys177 functions as the Nucleophile in the catalytic mechanism. DUMP-binding positions include 206–209 (RSCD), Asn217, and 247–249 (HVY). Residue Asp209 participates in (6R)-5,10-methylene-5,6,7,8-tetrahydrofolate binding.

The protein belongs to the thymidylate synthase family. In terms of assembly, homodimer.

It localises to the nucleus. The enzyme catalyses dUMP + (6R)-5,10-methylene-5,6,7,8-tetrahydrofolate = 7,8-dihydrofolate + dTMP. It functions in the pathway pyrimidine metabolism; dTTP biosynthesis. With respect to regulation, inhibited by 5-fluoro-2'-deoxyuridine 5'-monophosphate (FdUMP). Functionally, thymidylate synthase required for de novo biosynthesis of pyrimidine deoxyribonucleotides. Required for both nuclear and mitochondrial DNA synthesis. The chain is Thymidylate synthase (CDC21) from Saccharomyces cerevisiae (strain ATCC 204508 / S288c) (Baker's yeast).